The primary structure comprises 706 residues: Triadin (706 aa).

The disordered stretch occupies residues 1–28 (MTEITAEGNASTTTTVIDSKNGSVPKSP). Residues 1–47 (MTEITAEGNASTTTTVIDSKNGSVPKSPGKVLKRTVTEDLVTTFSSP) lie on the Cytoplasmic side of the membrane. Over residues 8–24 (GNASTTTTVIDSKNGSV) the composition is skewed to polar residues. Residues 48-68 (AAWLLVIALIITWSAVAVVMF) form a helical membrane-spanning segment. Residues 69–706 (DLVDYKNFSA…GKPNSPGPKQ (638 aa)) lie on the Lumenal side of the membrane. A glycan (N-linked (GlcNAc...) asparagine) is linked at Asn75. Positions 117–127 (DGDEEDDEGDE) are enriched in acidic residues. 3 disordered regions span residues 117–265 (DGDE…EQKD), 281–663 (DLKP…KKQK), and 684–706 (FPVTPAQYPGESSGKPNSPGPKQ). Composition is skewed to basic and acidic residues over residues 128-254 (DTAK…ESKE), 309-358 (PEEK…KSPD), 372-432 (TKKD…KEEV), 443-518 (AKKE…EVKP), 525-552 (IKKEEKPEQDIMKPEKTALHGKPEEKVL), 570-588 (KKAEHQEKEPPSIKTDKPK), and 599-621 (ESGKKKIEKSEKEIKVPARRESH). A glycan (N-linked (GlcNAc...) asparagine) is linked at Asn625. Residues 628-651 (KAEKPARGSKEGFEDVPASKKAKE) are compositionally biased toward basic and acidic residues.

In terms of assembly, interacts with CASQ2. Homooligomer of variable subunit number; disulfide-linked. Interacts with CASQ1 and RYR1 in skeletal muscle. Phosphorylated by CaMK2. In terms of processing, N-glycosylated. In terms of tissue distribution, detected in skeletal muscle and in heart (at protein level). Detected in skeletal muscle and in heart.

The protein localises to the sarcoplasmic reticulum membrane. Functionally, contributes to the regulation of lumenal Ca2+ release via the sarcoplasmic reticulum calcium release channels RYR1 and RYR2, a key step in triggering skeletal and heart muscle contraction. Required for normal organization of the triad junction, where T-tubules and the sarcoplasmic reticulum terminal cisternae are in close contact. Required for normal skeletal muscle strength. Plays a role in excitation-contraction coupling in the heart and in regulating the rate of heart beats. The protein is Triadin (TRDN) of Oryctolagus cuniculus (Rabbit).